The chain runs to 276 residues: Ribosomal RNA small subunit methyltransferase A (276 aa).

6 residues coordinate S-adenosyl-L-methionine: N27, L29, G54, E75, D101, and N123.

This sequence belongs to the class I-like SAM-binding methyltransferase superfamily. rRNA adenine N(6)-methyltransferase family. RsmA subfamily.

The protein localises to the cytoplasm. It catalyses the reaction adenosine(1518)/adenosine(1519) in 16S rRNA + 4 S-adenosyl-L-methionine = N(6)-dimethyladenosine(1518)/N(6)-dimethyladenosine(1519) in 16S rRNA + 4 S-adenosyl-L-homocysteine + 4 H(+). In terms of biological role, specifically dimethylates two adjacent adenosines (A1518 and A1519) in the loop of a conserved hairpin near the 3'-end of 16S rRNA in the 30S particle. May play a critical role in biogenesis of 30S subunits. The chain is Ribosomal RNA small subunit methyltransferase A from Bartonella henselae (strain ATCC 49882 / DSM 28221 / CCUG 30454 / Houston 1) (Rochalimaea henselae).